We begin with the raw amino-acid sequence, 440 residues long: Thymidine phosphorylase (440 aa).

Belongs to the thymidine/pyrimidine-nucleoside phosphorylase family. In terms of assembly, homodimer.

It carries out the reaction thymidine + phosphate = 2-deoxy-alpha-D-ribose 1-phosphate + thymine. It functions in the pathway pyrimidine metabolism; dTMP biosynthesis via salvage pathway; dTMP from thymine: step 1/2. The enzymes which catalyze the reversible phosphorolysis of pyrimidine nucleosides are involved in the degradation of these compounds and in their utilization as carbon and energy sources, or in the rescue of pyrimidine bases for nucleotide synthesis. The chain is Thymidine phosphorylase from Shigella flexneri serotype 5b (strain 8401).